Reading from the N-terminus, the 281-residue chain is Splicing regulator RBM11 (281 aa).

Positions R10–G87 constitute an RRM domain. Positions P184–Y281 are disordered. Composition is skewed to polar residues over residues Y187–N217 and Y229–Y242. The Bipartite nuclear localization signal motif lies at N245 to R280. A compositionally biased stretch (basic residues) spans K271 to Y281.

As to quaternary structure, homodimer. In terms of tissue distribution, expressed in brain, hippocampus, prefrontal cortex, cerebellum, spinal cord, testis, mammary gland, spleen and kidney. Also expressed in fetal brain.

The protein resides in the nucleus. It is found in the nucleoplasm. Its subcellular location is the nucleus speckle. Its function is as follows. Tissue-specific splicing factor with potential implication in the regulation of alternative splicing during neuron and germ cell differentiation. Antagonizes SRSF1-mediated BCL-X splicing. May affect the choice of alternative 5' splice sites by binding to specific sequences in exons and antagonizing the SR protein SRSF1. This chain is Splicing regulator RBM11, found in Homo sapiens (Human).